Here is an 82-residue protein sequence, read N- to C-terminus: UPF0180 protein BH2667 (82 aa).

Belongs to the UPF0180 family.

The chain is UPF0180 protein BH2667 from Halalkalibacterium halodurans (strain ATCC BAA-125 / DSM 18197 / FERM 7344 / JCM 9153 / C-125) (Bacillus halodurans).